The primary structure comprises 103 residues: MSGRGKGGKGLGKGGAKRHRKILRDNIQGITKPAIRRLARRGGVKRISGLIYEETRGVLKIFLENVIRDSVTYTEHAKRKTVTALDVVYALKRSGRTLYGFGA.

Residues 1 to 14 (MSGRGKGGKGLGKG) are compositionally biased toward gly residues. The tract at residues 1 to 20 (MSGRGKGGKGLGKGGAKRHR) is disordered. Lys-6 is modified (N6-acetyl-N6-methyllysine; alternate). Lys-6, Lys-9, and Lys-13 each carry N6-methyllysine; alternate. Lys-13 carries the post-translational modification N6-acetyl-N6-methyllysine; alternate. A DNA-binding region spans residues 17 to 21 (KRHRK). Lys-92 carries the N6-glutaryllysine modification.

The protein belongs to the histone H4 family. As to quaternary structure, the nucleosome is a histone octamer containing two molecules each of H2A, H2B, H3 and H4 assembled in one H3-H4 heterotetramer and two H2A-H2B heterodimers. The octamer wraps approximately 147 bp of DNA. In terms of processing, glutarylation at Lys-92 (H4K91glu) destabilizes nucleosomes by promoting dissociation of the H2A-H2B dimers from nucleosomes.

The protein localises to the nucleus. Its subcellular location is the chromosome. Functionally, core component of nucleosome. Nucleosomes wrap and compact DNA into chromatin, limiting DNA accessibility to the cellular machineries which require DNA as a template. Histones thereby play a central role in transcription regulation, DNA repair, DNA replication and chromosomal stability. DNA accessibility is regulated via a complex set of post-translational modifications of histones, also called histone code, and nucleosome remodeling. The protein is Histone H4 (H4.1) of Phanerodontia chrysosporium (White-rot fungus).